Here is a 249-residue protein sequence, read N- to C-terminus: O-methyltransferase adaD (249 aa).

Residues 1–15 (MSSVTLTTTTTTTST) show a composition bias toward low complexity. The disordered stretch occupies residues 1–26 (MSSVTLTTTTTTTSTPPKPTPKDEPQ).

The protein belongs to the methyltransferase superfamily.

The catalysed reaction is 2-acetyl-3,4a,8,10,11,12a-hexahydroxy-1,4,4a,5,12,12a-hexahydrotetracene-1,12-dione + S-adenosyl-L-methionine = TAN-1612 + S-adenosyl-L-homocysteine + H(+). Its pathway is secondary metabolite biosynthesis. O-methyltransferase; part of the gene cluster that mediates the biosynthesis of the linear tetracyclic TAN-1612 neuropeptide Y receptor antagonist. The decaketide backbone of TAN-1612 is synthesized by the non-reducing polyketide synthase adaA via condensation of one acetyl-CoA starter unit with 9 malonyl-CoA units. The FAD-dependent monooxygenase adaC then performs hydroxylation at C2 while the polaketide chain is still attached to the NRPKS adaA. The alpha-hydroxylation step at C2 appears to be crucial for the following C18-C1 Claisen cyclization and release of the C9-hydroxyl version of TAN-1612 from the NRPKS adaA, two steps performed by the lactamase-like protein adaB. Finally, the O-methyltransferase adaD performs the C9 O-methylation to complete the biosynthesis of TAN-1612. In Aspergillus niger (strain ATCC MYA-4892 / CBS 513.88 / FGSC A1513), this protein is O-methyltransferase adaD.